A 391-amino-acid chain; its full sequence is Pectate lyase D (391 aa).

Residues 1–31 (MNNTRVSFRSTKSLLAAIIATSMMTWSVNRA) form the signal peptide. D170 and D213 together coordinate Ca(2+). Residue R266 is part of the active site.

It belongs to the polysaccharide lyase 1 family. PLBC subfamily. It depends on Ca(2+) as a cofactor.

The protein resides in the secreted. The enzyme catalyses Eliminative cleavage of (1-&gt;4)-alpha-D-galacturonan to give oligosaccharides with 4-deoxy-alpha-D-galact-4-enuronosyl groups at their non-reducing ends.. It functions in the pathway glycan metabolism; pectin degradation; 2-dehydro-3-deoxy-D-gluconate from pectin: step 2/5. Involved in maceration and soft-rotting of plant tissue. The chain is Pectate lyase D (pelD) from Dickeya chrysanthemi (Pectobacterium chrysanthemi).